Reading from the N-terminus, the 144-residue chain is Large ribosomal subunit protein uL15 (144 aa).

Positions 1 to 55 (MQLNELKPVAGSRFKRLRKGRGLSSGHGFTSGRGTKGQKAHGKTRLGFEGGQMPL) are disordered. Positions 23–35 (LSSGHGFTSGRGT) are enriched in gly residues.

Belongs to the universal ribosomal protein uL15 family. In terms of assembly, part of the 50S ribosomal subunit.

Its function is as follows. Binds to the 23S rRNA. In Limosilactobacillus fermentum (strain NBRC 3956 / LMG 18251) (Lactobacillus fermentum), this protein is Large ribosomal subunit protein uL15.